Here is a 647-residue protein sequence, read N- to C-terminus: Endogenous retrovirus group K member 8 Gag polyprotein (647 aa).

Gly-2 carries N-myristoyl glycine lipidation. Residues 165–264 form a disordered region; it reads GKGPELVGPS…APPSRQGSEL (100 aa). Residues 232–247 show a composition bias toward pro residues; the sequence is GMPPAPQGREPYPQPP. 2 consecutive CCHC-type zinc fingers follow at residues 544 to 561 and 580 to 597; these read GKCY…NCPV and DLCP…QCRS. Residues 598-641 form a disordered region; the sequence is KFDKNGQPLSGNEQRGQPQAPQQTGAFPIQPFVPQGFQDNNPHC. The span at 604-622 shows a compositional bias: polar residues; it reads QPLSGNEQRGQPQAPQQTG.

The protein belongs to the beta type-B retroviral Gag protein family. HERV class-II K(HML-2) gag subfamily. Myristoylation is essential for retroviral assembly. Alteration of the glycine residue leads to a block in the budding of particles and an accumulation of Gag inside the cell. Post-translationally, specific enzymatic cleavages may yield mature proteins.

Its subcellular location is the cell membrane. The products of the Gag polyproteins of infectious retroviruses perform highly complex orchestrated tasks during the assembly, budding, maturation, and infection stages of the viral replication cycle. During viral assembly, the proteins form membrane associations and self-associations that ultimately result in budding of an immature virion from the infected cell. Gag precursors also function during viral assembly to selectively bind and package two plus strands of genomic RNA. Endogenous Gag proteins may have kept, lost or modified their original function during evolution. In Homo sapiens (Human), this protein is Endogenous retrovirus group K member 8 Gag polyprotein (ERVK-8).